The primary structure comprises 149 residues: Calmodulin (149 aa).

EF-hand domains are found at residues 8–43 (QQIAEFKEAFSLFDKDSDGKITTKELGTVMRSLGQN), 44–79 (PSESELTDMINEVDVNSDGSIDFPEFLTMMARKMKD), 81–116 (DSEAEIAEAFKVFDRNGDGKISAAELRHLLTSIGEK), and 117–149 (LSDADVDQMIKEADTNNDGEIDIQEFTSLLAAK). Positions 21, 23, 25, 27, 32, 57, 59, 61, 63, 68, 94, 96, 98, 100, 105, 130, 132, 134, 136, and 141 each coordinate Ca(2+).

This sequence belongs to the calmodulin family.

In terms of biological role, calmodulin mediates the control of a large number of enzymes, ion channels and other proteins by Ca(2+). Among the enzymes to be stimulated by the calmodulin-Ca(2+) complex are a number of protein kinases and phosphatases. This Candida albicans (Yeast) protein is Calmodulin (CMD1).